A 299-amino-acid chain; its full sequence is Fibrinogen silencer-binding protein (299 aa).

Lysine 94 participates in a covalent cross-link: Glycyl lysine isopeptide (Lys-Gly) (interchain with G-Cter in SUMO2).

In terms of assembly, interacts with APBA1 (via PDZ 1 and 2 domains). Expressed in multiple tissues including brain.

The protein resides in the nucleus. Functionally, transcriptional repressor that down-regulates the expression of the fibrinogen gamma chain. Represses transcription of GSK3B gene promoter via its interaction with APBA1. This Homo sapiens (Human) protein is Fibrinogen silencer-binding protein (FSBP).